The following is a 74-amino-acid chain: Cytochrome c oxidase assembly factor 5 (74 aa).

The CHCH domain maps to 27-65 (ESDCVVQEGKSPRQCLKEGYCNSLKYAFFECKRSVLDNR). A Cx10C motif motif is present at residues 30–41 (CVVQEGKSPRQC). Intrachain disulfides connect cysteine 30–cysteine 57 and cysteine 41–cysteine 47. At serine 37 the chain carries Phosphoserine. The short motif at 47–57 (CNSLKYAFFEC) is the Cx9C motif element.

It belongs to the PET191 family.

Functionally, involved in an early step of the mitochondrial complex IV assembly process. The protein is Cytochrome c oxidase assembly factor 5 (Coa5) of Pongo abelii (Sumatran orangutan).